The primary structure comprises 212 residues: uncharacterized protein (212 aa).

The Toprim domain maps to 105 to 187; the sequence is NTIYLVEGDF…QVKVVQLKGK (83 aa).

This is an uncharacterized protein from Mycoplasma pneumoniae (strain ATCC 29342 / M129 / Subtype 1) (Mycoplasmoides pneumoniae).